The primary structure comprises 36 residues: Photosystem II reaction center protein M (36 aa).

Residues 7–27 (GFVASLMFVLVPTVFLIVLFI) form a helical membrane-spanning segment.

It belongs to the PsbM family. In terms of assembly, PSII is composed of 1 copy each of membrane proteins PsbA, PsbB, PsbC, PsbD, PsbE, PsbF, PsbH, PsbI, PsbJ, PsbK, PsbL, PsbM, PsbT, PsbX, PsbY, PsbZ, Psb30/Ycf12, peripheral proteins PsbO, CyanoQ (PsbQ), PsbU, PsbV and a large number of cofactors. It forms dimeric complexes.

The protein localises to the cellular thylakoid membrane. Functionally, one of the components of the core complex of photosystem II (PSII). PSII is a light-driven water:plastoquinone oxidoreductase that uses light energy to abstract electrons from H(2)O, generating O(2) and a proton gradient subsequently used for ATP formation. It consists of a core antenna complex that captures photons, and an electron transfer chain that converts photonic excitation into a charge separation. This subunit is found at the monomer-monomer interface. This Synechococcus sp. (strain CC9311) protein is Photosystem II reaction center protein M.